We begin with the raw amino-acid sequence, 563 residues long: Kdo(2)-lipid A phosphoethanolamine 7''-transferase (563 aa).

The Cytoplasmic portion of the chain corresponds to 1 to 9 (MRYIKSITQ). Residues 10-30 (QKLSFLLAIYIGLFMNGAVFY) traverse the membrane as a helical segment. The Periplasmic portion of the chain corresponds to 31-48 (RRFGSYAHDFTVWKGISA). A helical transmembrane segment spans residues 49 to 69 (VVELAATVLVTFFLLRLLSLF). Residues 70–79 (GRRSWRILAS) lie on the Cytoplasmic side of the membrane. A helical transmembrane segment spans residues 80 to 100 (LVVLFSAGASYYMTFLNVVIG). The Periplasmic portion of the chain corresponds to 101–117 (YGIIASVMTTDIDLSKE). Residues 118–138 (VVGLNFILWLIAVSALPLILI) traverse the membrane as a helical segment. The Cytoplasmic segment spans residues 139–159 (WNNRCRYTLLRQLRTPGQRIR). A helical membrane pass occupies residues 160–180 (SLAVVVLAGIMVWAPIRLLDI). Residues 181–563 (QQKKVERATG…IPQAKEAAAN (383 aa)) are Periplasmic-facing.

This sequence belongs to the phosphoethanolamine transferase family. EptB subfamily. Ca(2+) serves as cofactor.

It localises to the cell inner membrane. The catalysed reaction is alpha-Kdo-(2-&gt;4)-alpha-Kdo-(2-&gt;6)-lipid A (E. coli) + a 1,2-diacyl-sn-glycero-3-phosphoethanolamine = 7-O-[2-aminoethoxy(hydroxy)phosphoryl]-alpha-Kdo-(2-&gt;4)-alpha-Kdo-(2-&gt;6)-lipid A + a 1,2-diacyl-sn-glycerol. The enzyme catalyses alpha-Kdo-(2-&gt;4)-alpha-Kdo-(2-&gt;6)-lipid IVA (E. coli) + a 1,2-diacyl-sn-glycero-3-phosphoethanolamine = 7-O-[2-aminoethoxy(hydroxy)phosphoryl]-alpha-Kdo-(2-&gt;4)-alpha-Kdo-(2-&gt;6)-lipid IVA (E. coli) + a 1,2-diacyl-sn-glycerol. Inhibited by calcium concentrations higher than 1 mM. Catalyzes the addition of a phosphoethanolamine (pEtN) moiety to the outer 3-deoxy-D-manno-octulosonic acid (Kdo) residue of a Kdo(2)-lipid A. Phosphatidylethanolamines with one unsaturated acyl group function as pEtN donors and the reaction releases diacylglycerol. This chain is Kdo(2)-lipid A phosphoethanolamine 7''-transferase (eptB), found in Escherichia coli (strain K12).